A 117-amino-acid polypeptide reads, in one-letter code: Cell division protein FtsL (117 aa).

Over 1–35 (MSNLAYQPEKQQRHAISPEKKVIVKKRASITLGEK) the chain is Cytoplasmic. A helical membrane pass occupies residues 36 to 56 (VLLVLFAAAVLSVSLLIVSKA). Topologically, residues 57–117 (YAAYQTNIEV…KDKKVKNIQE (61 aa)) are extracellular.

Belongs to the FtsL family. In terms of assembly, monomer. Interacts with DivIB and DivIC. Interaction with DivIC stabilizes FtsL against RasP cleavage. In terms of processing, cleaved by RasP. Cleavage is important for turnover and function of FtsL.

It localises to the cell membrane. Essential cell division protein that may play a structural role. Probably involved in the regulation of the timing of cell division. Also required for sporulation. The protein is Cell division protein FtsL of Bacillus subtilis (strain 168).